The sequence spans 132 residues: Fatty acid-binding protein, intestinal (132 aa).

Ala2 is subject to N-acetylalanine. Positions 83 and 107 each coordinate hexadecanoate. Residues Trp83 and Arg107 each contribute to the tetradecanoate site.

The protein belongs to the calycin superfamily. Fatty-acid binding protein (FABP) family.

The protein localises to the cytoplasm. Functionally, FABPs are thought to play a role in the intracellular transport of long-chain fatty acids and their acyl-CoA esters. FABP2 is probably involved in triglyceride-rich lipoprotein synthesis. Binds saturated long-chain fatty acids with a high affinity, but binds with a lower affinity to unsaturated long-chain fatty acids. FABP2 may also help maintain energy homeostasis by functioning as a lipid sensor. The chain is Fatty acid-binding protein, intestinal (FABP2) from Bos taurus (Bovine).